The following is a 280-amino-acid chain: 4-diphosphocytidyl-2-C-methyl-D-erythritol kinase (280 aa).

Residue K8 is part of the active site. P91–T101 contacts ATP. Residue D133 is part of the active site.

It belongs to the GHMP kinase family. IspE subfamily.

The catalysed reaction is 4-CDP-2-C-methyl-D-erythritol + ATP = 4-CDP-2-C-methyl-D-erythritol 2-phosphate + ADP + H(+). It functions in the pathway isoprenoid biosynthesis; isopentenyl diphosphate biosynthesis via DXP pathway; isopentenyl diphosphate from 1-deoxy-D-xylulose 5-phosphate: step 3/6. Catalyzes the phosphorylation of the position 2 hydroxy group of 4-diphosphocytidyl-2C-methyl-D-erythritol. The protein is 4-diphosphocytidyl-2-C-methyl-D-erythritol kinase of Clostridium botulinum (strain Okra / Type B1).